The following is a 254-amino-acid chain: Alcohol dehydrogenase 2 (254 aa).

10 to 33 (FVAGLGGIGFDTSREIVKSGPKNL) contributes to the NAD(+) binding site. Position 138 (S138) interacts with substrate. Y151 serves as the catalytic Proton acceptor.

The protein belongs to the short-chain dehydrogenases/reductases (SDR) family. As to quaternary structure, homodimer.

It catalyses the reaction a primary alcohol + NAD(+) = an aldehyde + NADH + H(+). It carries out the reaction a secondary alcohol + NAD(+) = a ketone + NADH + H(+). This Drosophila buzzatii (Fruit fly) protein is Alcohol dehydrogenase 2 (Adh2).